Reading from the N-terminus, the 253-residue chain is tRNA (guanine-N(1)-)-methyltransferase (253 aa).

S-adenosyl-L-methionine-binding positions include G111 and 131–136; that span reads LGDFVL.

Belongs to the RNA methyltransferase TrmD family. As to quaternary structure, homodimer.

Its subcellular location is the cytoplasm. The enzyme catalyses guanosine(37) in tRNA + S-adenosyl-L-methionine = N(1)-methylguanosine(37) in tRNA + S-adenosyl-L-homocysteine + H(+). In terms of biological role, specifically methylates guanosine-37 in various tRNAs. The chain is tRNA (guanine-N(1)-)-methyltransferase from Synechococcus sp. (strain JA-3-3Ab) (Cyanobacteria bacterium Yellowstone A-Prime).